A 415-amino-acid polypeptide reads, in one-letter code: MFERNRYTIDQIDPEVFAAIQQENQRQEDHIELIASENYTSPAVMAAQGSQLTNKYAEGYPGKRYYGGCEYVDVVEQLAIDRVKQLFGAEAANVQPNSGSQANQGVFFAMLKPGDTIMGMSLAEGGHLTHGMALNMSGKWFNVVSYGLNAQEDIDYDALEALAQEKKPKLIIAGASAFALRIDFERIAKVAKAVGAYFMVDMAHYAGLIAAGVYPNPVPHADFVTTTTHKSLRGPRGGVILMKAEHEKAINSAIFPGIQGGPLMHVIAGKAVAFKEAQSPTFKAYQEQVVKNARAMAETLMARGLRIVSGRTESHVMLVDLRAKSITGKEAEKVLGDAHITVNKNAIPNDPEKPFVTSGIRLGSPAMTTRGFKEGEAVKVAHLIADVLDNPHDEANIAAVRAKVAELTKQFPVYA.

(6S)-5,6,7,8-tetrahydrofolate-binding positions include Leu-122 and 126–128; that span reads GHL. Lys-230 is subject to N6-(pyridoxal phosphate)lysine.

It belongs to the SHMT family. In terms of assembly, homodimer. The cofactor is pyridoxal 5'-phosphate.

It is found in the cytoplasm. It catalyses the reaction (6R)-5,10-methylene-5,6,7,8-tetrahydrofolate + glycine + H2O = (6S)-5,6,7,8-tetrahydrofolate + L-serine. It functions in the pathway one-carbon metabolism; tetrahydrofolate interconversion. The protein operates within amino-acid biosynthesis; glycine biosynthesis; glycine from L-serine: step 1/1. Functionally, catalyzes the reversible interconversion of serine and glycine with tetrahydrofolate (THF) serving as the one-carbon carrier. This reaction serves as the major source of one-carbon groups required for the biosynthesis of purines, thymidylate, methionine, and other important biomolecules. Also exhibits THF-independent aldolase activity toward beta-hydroxyamino acids, producing glycine and aldehydes, via a retro-aldol mechanism. The chain is Serine hydroxymethyltransferase 1 from Ralstonia nicotianae (strain ATCC BAA-1114 / GMI1000) (Ralstonia solanacearum).